A 241-amino-acid polypeptide reads, in one-letter code: Purine nucleoside phosphorylase DeoD-type 1 (241 aa).

Position 5 (His5) interacts with a purine D-ribonucleoside. Residues Gly21, Arg25, Arg44, and 88 to 91 (RVGS) contribute to the phosphate site. Residues 180–182 (EME) and 204–205 (SD) contribute to the a purine D-ribonucleoside site. Asp205 serves as the catalytic Proton donor.

This sequence belongs to the PNP/UDP phosphorylase family. As to quaternary structure, homohexamer; trimer of homodimers.

It carries out the reaction a purine D-ribonucleoside + phosphate = a purine nucleobase + alpha-D-ribose 1-phosphate. It catalyses the reaction a purine 2'-deoxy-D-ribonucleoside + phosphate = a purine nucleobase + 2-deoxy-alpha-D-ribose 1-phosphate. Catalyzes the reversible phosphorolytic breakdown of the N-glycosidic bond in the beta-(deoxy)ribonucleoside molecules, with the formation of the corresponding free purine bases and pentose-1-phosphate. In Vibrio cholerae serotype O1 (strain ATCC 39315 / El Tor Inaba N16961), this protein is Purine nucleoside phosphorylase DeoD-type 1.